A 459-amino-acid chain; its full sequence is Sperm microtubule associated protein 2-like (459 aa).

The interval Met1–Pro138 is disordered. Residues Thr21–Thr30 show a composition bias toward low complexity. Residues Asn47 to Tyr63 show a composition bias toward acidic residues. Over residues Glu64 to Glu73 the composition is skewed to basic and acidic residues. Positions Ser77–Pro87 are enriched in polar residues. Composition is skewed to basic and acidic residues over residues Lys91–Asp112 and Glu127–Leu136. THEG repeat units follow at residues Lys172 to Gln190, Ala212 to Val231, Pro258 to Phe277, Thr291 to Thr310, Ser327 to Lys346, Ala367 to Val386, Ala403 to Arg422, and Ser440 to Arg459.

The sequence is that of Sperm microtubule associated protein 2-like from Mus musculus (Mouse).